A 371-amino-acid chain; its full sequence is Peptide chain release factor 2 (371 aa).

An N5-methylglutamine modification is found at Gln253.

This sequence belongs to the prokaryotic/mitochondrial release factor family. Post-translationally, methylated by PrmC. Methylation increases the termination efficiency of RF2.

Its subcellular location is the cytoplasm. Functionally, peptide chain release factor 2 directs the termination of translation in response to the peptide chain termination codons UGA and UAA. The protein is Peptide chain release factor 2 of Mycobacterium sp. (strain JLS).